A 235-amino-acid polypeptide reads, in one-letter code: Exosome complex component RRP46 (235 aa).

The tract at residues 1 to 21 (MEGAKRADANLLTDTGTESSP) is disordered. The segment covering 12–21 (LTDTGTESSP) has biased composition (polar residues). Phosphoserine occurs at positions 20 and 23.

It belongs to the RNase PH family. In terms of assembly, homodimer. Component of the RNA exosome core complex (Exo-9), composed of EXOSC1, EXOSC2, EXOSC3, EXOSC4, EXOSC5, EXOSC6, EXOSC7, EXOSC8 and EXOSC9; within the complex interacts with EXOSC3, EXOSC8, and EXOSC9. The catalytically inactive RNA exosome core complex (Exo-9) associates with the catalytic subunit EXOSC10/RRP6. Exo-9 may associate with DIS3 to form the nucleolar exosome complex, or DIS3L to form the cytoplasmic exosome complex. Exo-9 is formed by a hexameric base ring consisting of the heterodimers EXOSC4-EXOSC9, EXOSC5-EXOSC8 and EXOSC6-EXOSC7, and a cap ring consisting of EXOSC1, EXOSC2 and EXOSC3. The RNA exosome complex associates with cofactors C1D/RRP47, MPHOSPH6/MPP6 and MTREX/MTR4. Interacts with GTPBP1. Interacts with ZC3HAV1. Interacts with DDX17 only in the presence of ZC3HAV1 in an RNA-independent manner.

It localises to the nucleus. It is found in the nucleolus. The protein resides in the cytoplasm. Functionally, non-catalytic component of the RNA exosome complex which has 3'-&gt;5' exoribonuclease activity and participates in a multitude of cellular RNA processing and degradation events. In the nucleus, the RNA exosome complex is involved in proper maturation of stable RNA species such as rRNA, snRNA and snoRNA, in the elimination of RNA processing by-products and non-coding 'pervasive' transcripts, such as antisense RNA species and promoter-upstream transcripts (PROMPTs), and of mRNAs with processing defects, thereby limiting or excluding their export to the cytoplasm. The RNA exosome may be involved in Ig class switch recombination (CSR) and/or Ig variable region somatic hypermutation (SHM) by targeting AICDA deamination activity to transcribed dsDNA substrates. In the cytoplasm, the RNA exosome complex is involved in general mRNA turnover and specifically degrades inherently unstable mRNAs containing AU-rich elements (AREs) within their 3' untranslated regions, and in RNA surveillance pathways, preventing translation of aberrant mRNAs. It seems to be involved in degradation of histone mRNA. The catalytic inactive RNA exosome core complex of 9 subunits (Exo-9) is proposed to play a pivotal role in the binding and presentation of RNA for ribonucleolysis, and to serve as a scaffold for the association with catalytic subunits and accessory proteins or complexes. In vitro, EXOSC5 does not bind or digest single-stranded RNA and binds to double-stranded DNA without detectable DNase activity. The sequence is that of Exosome complex component RRP46 (Exosc5) from Mus musculus (Mouse).